Reading from the N-terminus, the 31-residue chain is Relaxin B chain (31 aa).

Glutamine 1 is subject to Pyrrolidone carboxylic acid.

Belongs to the insulin family. Heterodimer of a B chain and an A chain linked by two disulfide bonds.

It localises to the secreted. Its function is as follows. Relaxin is an ovarian hormone that acts with estrogen to produce dilatation of the birth canal in many mammals. In Phocoenoides dalli dalli (Dall's porpoise), this protein is Relaxin B chain.